Here is a 488-residue protein sequence, read N- to C-terminus: MSLPNTSSASEDKMCEGNRTAMASPQLLPLVVVLSSISLVTVGLNLLVLYAVRSERKLHTVGNLYIVSLSVADLIVGAVVMPMNILYLIMTKWSLGRPLCLFWLSMDYVASTASIFSVFILCIDRYRSVQQPLRYLRYRTKTRASATILGAWFLSFLWVIPILGWHHFTPLAPELREDKCETDFYNVTWFKIMTAIINFYLPTLLMLWFYVKIYKAVRRHCQHRQLTNGSLPTFLEIKLRSEDAKEGAKKPGKESPWGVQKRPSRDPTGGLDQKSTSEDPKVTSPTVFSQEGERETVTRPCFRLDVMQTQPVPEGDARGSKANDQTLSQPKMDEQSLSTCRRISETSEDQTLVDRQSFSRTTDSDTSIEPGLGKVKARSRSNSGLDYIKVTWKRLRSHSRQYVSGLHLNRERKAAKQLGCIMAAFILCWIPYFIFFMVIAFCNSCCSEPVHMFTIWLGYINSTLNPLIYPLCNENFKKTFKKILHIRS.

Residues 1 to 29 (MSLPNTSSASEDKMCEGNRTAMASPQLLP) are Extracellular-facing. Residues Asn5 and Asn18 are each glycosylated (N-linked (GlcNAc...) asparagine). A helical membrane pass occupies residues 30–50 (LVVVLSSISLVTVGLNLLVLY). The Cytoplasmic segment spans residues 51-64 (AVRSERKLHTVGNL). Residues 65 to 89 (YIVSLSVADLIVGAVVMPMNILYLI) traverse the membrane as a helical segment. The Extracellular portion of the chain corresponds to 90-97 (MTKWSLGR). Residues 98–123 (PLCLFWLSMDYVASTASIFSVFILCI) form a helical membrane-spanning segment. Cys100 and Cys180 form a disulfide bridge. 2 residues coordinate histamine: Asp107 and Thr112. Positions 107–112 (DYVAST) are important for agonist binding. The Cytoplasmic portion of the chain corresponds to 124-144 (DRYRSVQQPLRYLRYRTKTRA). 2 positions are modified to phosphothreonine: Thr140 and Thr142. A helical membrane pass occupies residues 145–164 (SATILGAWFLSFLWVIPILG). The Extracellular segment spans residues 165–188 (WHHFTPLAPELREDKCETDFYNVT). A helical membrane pass occupies residues 189 to 211 (WFKIMTAIINFYLPTLLMLWFYV). Asn198 contributes to the histamine binding site. Topologically, residues 212-417 (KIYKAVRRHC…LNRERKAAKQ (206 aa)) are cytoplasmic. Residue Ser230 is modified to Phosphoserine. Positions 245-337 (KEGAKKPGKE…SQPKMDEQSL (93 aa)) are disordered. Residues 322–337 (ANDQTLSQPKMDEQSL) show a composition bias toward polar residues. Phosphoserine is present on residues Ser344, Ser347, Ser381, Ser383, Ser397, and Ser399. A helical transmembrane segment spans residues 418–441 (LGCIMAAFILCWIPYFIFFMVIAF). Positions 425–429 (FILCW) are important for agonist binding. Histamine is bound at residue Tyr432. A disulfide bond links Cys442 and Cys445. Residues 442–447 (CNSCCS) lie on the Extracellular side of the membrane. A helical membrane pass occupies residues 448–470 (EPVHMFTIWLGYINSTLNPLIYP). The Cytoplasmic segment spans residues 471–488 (LCNENFKKTFKKILHIRS).

It belongs to the G-protein coupled receptor 1 family. In terms of processing, phosphorylation at sites in the second and third cytoplasmic loops independently contribute to agonist-induced receptor down-regulation.

The protein localises to the cell membrane. In terms of biological role, G-protein-coupled receptor for histamine, a biogenic amine that functions as an immune modulator and a neurotransmitter. Through the H1 receptor, histamine mediates the contraction of smooth muscles and increases capillary permeability due to contraction of terminal venules. Also mediates neurotransmission in the central nervous system and thereby regulates circadian rhythms, emotional and locomotor activities as well as cognitive functions. This chain is Histamine H1 receptor, found in Mus musculus (Mouse).